Here is a 216-residue protein sequence, read N- to C-terminus: 3-isopropylmalate dehydratase small subunit (216 aa).

This sequence belongs to the LeuD family. LeuD type 1 subfamily. Heterodimer of LeuC and LeuD.

It carries out the reaction (2R,3S)-3-isopropylmalate = (2S)-2-isopropylmalate. The protein operates within amino-acid biosynthesis; L-leucine biosynthesis; L-leucine from 3-methyl-2-oxobutanoate: step 2/4. Catalyzes the isomerization between 2-isopropylmalate and 3-isopropylmalate, via the formation of 2-isopropylmaleate. The polypeptide is 3-isopropylmalate dehydratase small subunit (Methylibium petroleiphilum (strain ATCC BAA-1232 / LMG 22953 / PM1)).